Reading from the N-terminus, the 1694-residue chain is Homeobox-DDT domain protein RLT2 (1694 aa).

The segment at 1-24 (MEGGSEKTTPEGCGGESKSKRKMK) is disordered. Residues 17-76 (SKSKRKMKTAAQLEVLENTYSAEPYPSEAIRADLSVKLNLSDRQLQMWFCHRRLKERKST) constitute a DNA-binding region (homeobox). In terms of domain architecture, DDT spans 514-573 (DENVANLLMVWRFLITFADVLGLWPFTLDEFAQAFHDYDPRLMGEIHIVLLKTIIKDIEG). One can recognise an HTH HARE-type domain in the interval 696–765 (GTVKFAAFHV…APSTYCVRAS (70 aa)). Residues 795-816 (EDVDDAERDEDSESDVGEDPEV) are compositionally biased toward acidic residues. Disordered regions lie at residues 795 to 822 (EDVD…NLKK), 1450 to 1541 (KQEE…ICNE), 1555 to 1639 (AKTS…MNMK), and 1655 to 1674 (EDSY…AATR). Residues serine 806 and serine 808 each carry the phosphoserine modification. The segment covering 1459–1470 (GLGGVSSSGRGG) has biased composition (gly residues). 2 stretches are compositionally biased toward basic residues: residues 1471-1485 (RPPR…RGNG) and 1515-1531 (GGRK…RKRP). Acidic residues-rich tracts occupy residues 1561–1578 (DNDD…DDGE), 1589–1605 (EDYD…DFDG), and 1624–1635 (DEYEEEEEEEED).

In terms of assembly, interacts with CHR11. Interacts (via the DDT domain) with CHR11 (via C-terminus). In terms of tissue distribution, highly expressed in growing tissues such as inflorescence and flower meristems, young leaves and floral organs. Expressed in roots, rosette and cauline leaves, stems, flowers, inflorescences and siliques.

Its subcellular location is the nucleus. In terms of biological role, transcriptional regulator required for the maintenance of the plant vegetative phase. In association with CHR11 or CHR17 may prevent the early activation of the vegetative-to-reproductive transition by regulating key genes that contribute to flower timing, such as FT, SEP1, SEP3, AGL8/FUL, SOC1 and FLC. Involved in the transcriptional regulation of seed-specific gene expression. The chain is Homeobox-DDT domain protein RLT2 from Arabidopsis thaliana (Mouse-ear cress).